A 522-amino-acid polypeptide reads, in one-letter code: Man(5)GlcNAc(2)-PP-dolichol translocation protein RFT1 (522 aa).

10 consecutive transmembrane segments (helical) span residues 35–55, 75–95, 108–128, 143–165, 177–197, 322–342, 354–374, 400–420, 457–477, and 479–499; these read DVLGLVNVRLTLLYSSILFLT, LLWLSPIISTVISVVCVYLWY, VLLSFPISAIIESIAEPFSVI, FAIGQGMLICVKRIFVLAGLFMF, AQYIGAIAYLLFNFVAFYIYI, VVGVIGFVACTFGIPYSPVVI, GGALLLSLYSGYILVTAINGI, IIHLIINYVLCVYMNSAGFIV, TSIFLGVSLLATSFTYLLFAT, and PGLSYTLAHIAIGAVCLILTA.

Belongs to the RFT1 family.

It localises to the endoplasmic reticulum membrane. It participates in protein modification; protein glycosylation. Intramembrane glycolipid transporter that operates in the biosynthetic pathway of dolichol-linked oligosaccharides, the glycan precursors employed in protein asparagine (N)-glycosylation. The sequential addition of sugars to dolichol pyrophosphate produces dolichol-linked oligosaccharides containing fourteen sugars, including two GlcNAcs, nine mannoses and three glucoses. Once assembled, the oligosaccharide is transferred from the lipid to nascent proteins by oligosaccharyltransferases. The assembly of dolichol-linked oligosaccharides begins on the cytosolic side of the endoplasmic reticulum membrane and finishes in its lumen. RFT1 could mediate the translocation of the cytosolically oriented intermediate DolPP-GlcNAc2Man5, produced by ALG11, into the ER lumen where dolichol-linked oligosaccharides assembly continues. However, the intramembrane lipid transporter activity could not be confirmed in vitro. This chain is Man(5)GlcNAc(2)-PP-dolichol translocation protein RFT1, found in Caenorhabditis elegans.